We begin with the raw amino-acid sequence, 259 residues long: Global transcriptional regulator CodY (259 aa).

Residues 1–155 (MALLQKTRII…GATVVGMEIL (155 aa)) form a GAF domain region. A DNA-binding region (H-T-H motif) is located at residues 203–222 (ASKIADRVGITRSVIVNALR). Serine 215 is subject to Phosphoserine.

The protein belongs to the CodY family.

The protein resides in the cytoplasm. Functionally, DNA-binding global transcriptional regulator which is involved in the adaptive response to starvation and acts by directly or indirectly controlling the expression of numerous genes in response to nutrient availability. During rapid exponential growth, CodY is highly active and represses genes whose products allow adaptation to nutrient depletion. This is Global transcriptional regulator CodY from Bacillus pumilus (strain SAFR-032).